The following is a 497-amino-acid chain: Glucose-6-phosphate isomerase (497 aa).

Glutamate 350 serves as the catalytic Proton donor. Residues histidine 381 and lysine 485 contribute to the active site.

Belongs to the GPI family.

The protein resides in the cytoplasm. The catalysed reaction is alpha-D-glucose 6-phosphate = beta-D-fructose 6-phosphate. It functions in the pathway carbohydrate biosynthesis; gluconeogenesis. The protein operates within carbohydrate degradation; glycolysis; D-glyceraldehyde 3-phosphate and glycerone phosphate from D-glucose: step 2/4. Its function is as follows. Catalyzes the reversible isomerization of glucose-6-phosphate to fructose-6-phosphate. The sequence is that of Glucose-6-phosphate isomerase from Legionella pneumophila.